The following is a 303-amino-acid chain: D-alanine--D-alanine ligase (303 aa).

Residues 102 to 298 (RILLAAAGLP…YPELCDWMVR (197 aa)) form the ATP-grasp domain. An ATP-binding site is contributed by 128 to 181 (PLPAPYVIKPVAEGSSVGVEIVRTGDNRRAEIARTWRFGKEALVESFIPGRELT). Mg(2+) is bound by residues D251, E265, and N267.

This sequence belongs to the D-alanine--D-alanine ligase family. Requires Mg(2+) as cofactor. Mn(2+) serves as cofactor.

The protein localises to the cytoplasm. It catalyses the reaction 2 D-alanine + ATP = D-alanyl-D-alanine + ADP + phosphate + H(+). The protein operates within cell wall biogenesis; peptidoglycan biosynthesis. Its function is as follows. Cell wall formation. In Gluconobacter oxydans (strain 621H) (Gluconobacter suboxydans), this protein is D-alanine--D-alanine ligase.